The chain runs to 337 residues: Ribosomal RNA small subunit methyltransferase H (337 aa).

S-adenosyl-L-methionine-binding positions include 36 to 38, aspartate 56, phenylalanine 82, aspartate 100, and glutamine 107; that span reads GGH. The interval 317-337 is disordered; it reads RRSGRIPNPQSPIPASQGDAR.

Belongs to the methyltransferase superfamily. RsmH family.

It localises to the cytoplasm. The enzyme catalyses cytidine(1402) in 16S rRNA + S-adenosyl-L-methionine = N(4)-methylcytidine(1402) in 16S rRNA + S-adenosyl-L-homocysteine + H(+). Specifically methylates the N4 position of cytidine in position 1402 (C1402) of 16S rRNA. This is Ribosomal RNA small subunit methyltransferase H from Xanthomonas oryzae pv. oryzae (strain KACC10331 / KXO85).